A 631-amino-acid polypeptide reads, in one-letter code: Peptide-N(4)-(N-acetyl-beta-glucosaminyl)asparagine amidase (631 aa).

One can recognise a PUB domain in the interval 34–97; it reads EAVRILLVLL…PSSNAYTLPT (64 aa). Ser126 is subject to Phosphoserine. Residues Cys246, Cys249, Cys272, and Cys273 each contribute to the Zn(2+) site. The Nucleophile role is filled by Cys296. Active-site residues include His323 and Asp340. The PAW domain maps to 441 to 631; sequence ELKGRSSGSL…YPFDLQVQLH (191 aa).

The protein belongs to the transglutaminase-like superfamily. PNGase family. It depends on Zn(2+) as a cofactor.

It localises to the cytoplasm. The enzyme catalyses Hydrolysis of an N(4)-(acetyl-beta-D-glucosaminyl)asparagine residue in which the glucosamine residue may be further glycosylated, to yield a (substituted) N-acetyl-beta-D-glucosaminylamine and a peptide containing an aspartate residue.. Its function is as follows. Specifically deglycosylates the denatured form of N-linked glycoproteins in the cytoplasm and assists their proteasome-mediated degradation. Cleaves the beta-aspartyl-glucosamine (GlcNAc) of the glycan and the amide side chain of Asn, converting Asn to Asp. Prefers proteins containing high-mannose over those bearing complex type oligosaccharides. Can recognize misfolded proteins in the endoplasmic reticulum that are exported to the cytosol to be destroyed and deglycosylate them, while it has no activity toward native proteins. Deglycosylation is a prerequisite for subsequent proteasome-mediated degradation of some, but not all, misfolded glycoproteins. The sequence is that of Peptide-N(4)-(N-acetyl-beta-glucosaminyl)asparagine amidase (Pngl) from Drosophila melanogaster (Fruit fly).